The chain runs to 763 residues: Forkhead box protein M1 (763 aa).

The segment at 1 to 53 (MKTSPRRPLILKRRRLPLPVQNAPSETSEEEPKRSPAQQESNQAEASKEVAES) is disordered. The segment covering 36–45 (PAQQESNQAE) has biased composition (polar residues). Glycyl lysine isopeptide (Lys-Gly) (interchain with G-Cter in SUMO2) cross-links involve residues Lys-163, Lys-201, and Lys-325. Residues 198–232 (RSIKQEMEEKENCHLEQRQVKVEEPSRPSASWQNS) form a disordered region. A compositionally biased stretch (basic and acidic residues) spans 200-223 (IKQEMEEKENCHLEQRQVKVEEPS). Residues 235-327 (ERPPYSYMAM…LTLDQVFKPL (93 aa)) constitute a DNA-binding region (fork-head). The tract at residues 329-351 (PGSPQLPEHLESQQKRPNPELRR) is disordered. Ser-331 is modified (phosphoserine). A compositionally biased stretch (basic and acidic residues) spans 336-351 (EHLESQQKRPNPELRR). Lys-356 participates in a covalent cross-link: Glycyl lysine isopeptide (Lys-Gly) (interchain with G-Cter in SUMO2). A Phosphoserine; by CHEK2 modification is found at Ser-376. Glycyl lysine isopeptide (Lys-Gly) (interchain with G-Cter in SUMO2) cross-links involve residues Lys-422 and Lys-440. Residues 482 to 711 (PPLEEWPSPA…PGSPEPQVSG (230 aa)) form a disordered region. Ser-489 is modified (phosphoserine; by GSK3). Residues 494 to 503 (FKEESSHSWE) are compositionally biased toward basic and acidic residues. Ser-522 carries the post-translational modification Phosphoserine. The span at 583-592 (DPASQLSYSQ) shows a compositional bias: polar residues. At Thr-611 the chain carries Phosphothreonine; by CDK1. Residues Thr-620, Thr-627, and Thr-662 each carry the phosphothreonine modification. A Phosphoserine; by CDK1 modification is found at Ser-693. Ser-730 and Ser-739 each carry phosphoserine; by PLK1.

In terms of assembly, interacts with PINT87aa which is encoded by the circular form of the long non-coding RNA LINC-PINT; the interaction inhibits FOXM1-mediated transcription of PHB2. In terms of processing, phosphorylated in M (mitotic) phase. Phosphorylation by the checkpoint kinase CHEK2 in response to DNA damage increases the FOXM1 protein stability probably stimulating the transcription of genes involved in DNA repair. Phosphorylated by CDK1 in late S and G2 phases, creating docking sites for the POLO box domains of PLK1. Subsequently, PLK1 binds and phosphorylates FOXM1, leading to activation of transcriptional activity and subsequent enhanced expression of key mitotic regulators. Phosphorylated by GSK3B leading to ubiquitination and proteasomal degradation. Ubiquitinated in a FBXW7-dependent manner leading to proteasomal degradation. Expressed in thymus, testis, small intestine, colon followed by ovary. Appears to be expressed only in adult organs containing proliferating/cycling cells or in response to growth factors. Also expressed in epithelial cell lines derived from tumors. Not expressed in resting cells. Isoform 2 is highly expressed in testis.

The protein resides in the nucleus. Functionally, transcription factor regulating the expression of cell cycle genes essential for DNA replication and mitosis. Plays a role in the control of cell proliferation. Also plays a role in DNA break repair, participating in the DNA damage checkpoint response. Promotes transcription of PHB2. The polypeptide is Forkhead box protein M1 (FOXM1) (Homo sapiens (Human)).